The chain runs to 291 residues: Signal peptidase I (291 aa).

Over 1–45 (MTMKKLTSTTTTLWDNKLFINNLKNFMQTNTESNNNKTTAQEWKS) the chain is Cytoplasmic. The helical transmembrane segment at 46 to 66 (FILVVVIALMIRILIIESFVV) threads the bilayer. The Periplasmic segment spans residues 67–291 (PTGSMKATIL…IFRNLYSIED (225 aa)). Active-site residues include Ser-70 and Lys-133.

Belongs to the peptidase S26 family.

The protein resides in the cell inner membrane. The catalysed reaction is Cleavage of hydrophobic, N-terminal signal or leader sequences from secreted and periplasmic proteins.. In Rickettsia bellii (strain RML369-C), this protein is Signal peptidase I (lepB).